Consider the following 189-residue polypeptide: dCTP deaminase, dUMP-forming (189 aa).

DCTP is bound by residues 101–106 (KSSLGR), aspartate 119, 127–129 (TLE), glutamine 148, tyrosine 162, and glutamine 174. Glutamate 129 (proton donor/acceptor) is an active-site residue.

Belongs to the dCTP deaminase family. Homotrimer.

The catalysed reaction is dCTP + 2 H2O = dUMP + NH4(+) + diphosphate. It functions in the pathway pyrimidine metabolism; dUMP biosynthesis; dUMP from dCTP: step 1/1. Functionally, bifunctional enzyme that catalyzes both the deamination of dCTP to dUTP and the hydrolysis of dUTP to dUMP without releasing the toxic dUTP intermediate. The polypeptide is dCTP deaminase, dUMP-forming (Rhodococcus jostii (strain RHA1)).